Consider the following 232-residue polypeptide: Leucyl/phenylalanyl-tRNA--protein transferase (232 aa).

Belongs to the L/F-transferase family.

It localises to the cytoplasm. It catalyses the reaction N-terminal L-lysyl-[protein] + L-leucyl-tRNA(Leu) = N-terminal L-leucyl-L-lysyl-[protein] + tRNA(Leu) + H(+). It carries out the reaction N-terminal L-arginyl-[protein] + L-leucyl-tRNA(Leu) = N-terminal L-leucyl-L-arginyl-[protein] + tRNA(Leu) + H(+). The catalysed reaction is L-phenylalanyl-tRNA(Phe) + an N-terminal L-alpha-aminoacyl-[protein] = an N-terminal L-phenylalanyl-L-alpha-aminoacyl-[protein] + tRNA(Phe). Functions in the N-end rule pathway of protein degradation where it conjugates Leu, Phe and, less efficiently, Met from aminoacyl-tRNAs to the N-termini of proteins containing an N-terminal arginine or lysine. The polypeptide is Leucyl/phenylalanyl-tRNA--protein transferase (Nitrosospira multiformis (strain ATCC 25196 / NCIMB 11849 / C 71)).